A 967-amino-acid polypeptide reads, in one-letter code: Dolichyl-phosphooligosaccharide-protein glycotransferase 1 (967 aa).

At 1–21 the chain is on the cytoplasmic side; that stretch reads MVKTQIKEKKKDEKVTIPLPG. Residues 22-42 traverse the membrane as a helical segment; it reads KIKTVLAFLVVLAFAAYGFYI. Residues 43-112 lie on the Extracellular side of the membrane; the sequence is RHLTAGKYFS…ISIFGYNELE (70 aa). Residues 53-55 carry the DXD motif 1 motif; sequence DPD. Residue aspartate 55 participates in Mn(2+) binding. Residues 113–133 traverse the membrane as a helical segment; it reads AFLLWPPFVGFLSVIGVYLLG. Over 134 to 135 the chain is Cytoplasmic; the sequence is RK. The chain crosses the membrane as a helical span at residues 136–156; sequence VLNEWAGMWGAIILSVLTANF. The Extracellular segment spans residues 157 to 165; it reads SRTFSGNAR. Residues arginine 165 and aspartate 167 each contribute to the Mn(2+) site. The DXD motif 2 signature appears at 165 to 167; it reads RGD. A helical transmembrane segment spans residues 166-186; that stretch reads GDGPFMMLFTFSAVLMLYYLT. Over 187 to 193 the chain is Cytoplasmic; the sequence is EENKNKK. The chain crosses the membrane as a helical span at residues 194–214; that stretch reads IIWGTLFVLLAGISTAAWNGS. Position 215 (proline 215) is a topological domain, extracellular. A helical membrane pass occupies residues 216 to 236; that stretch reads FGLMVLLGFASFQTIILFIFG. Over 237-247 the chain is Cytoplasmic; that stretch reads KINELREFIKE. A helical membrane pass occupies residues 248-268; it reads YYPAYLGILAISYLLTIPGIG. Lysine 269 is a topological domain (extracellular). The helical transmembrane segment at 270-290 threads the bilayer; it reads IGGFVRFAFEVFLGLVFLAIV. Over 291–306 the chain is Cytoplasmic; sequence MLYGGKYLNYSDKKHR. A helical membrane pass occupies residues 307–327; it reads FAVVAVIVIAGFAGAYIYVGP. The Extracellular portion of the chain corresponds to 328–360; that stretch reads KLFTLMGGAYQSTQVYETVQELAKTDWGDVKVY. A TIXE motif motif is present at residues 345-348; it reads TVQE. A helical membrane pass occupies residues 361–381; that stretch reads YGVEKPNGIVFFLGLVGAMIV. The Cytoplasmic segment spans residues 382–396; the sequence is TARYLYKLFKDGRRP. Residues 397 to 417 form a helical membrane-spanning segment; sequence HEELFAITFYVMSIYLLWTAA. Position 418 (arginine 418) is a topological domain, extracellular. Arginine 418 contributes to the a glycophospholipid binding site. A helical transmembrane segment spans residues 419 to 439; the sequence is FLFLASYAIALMSGVFAGYVL. Topologically, residues 440-453 are cytoplasmic; the sequence is ETVEKMKESIPIKA. A helical membrane pass occupies residues 454–474; that stretch reads ALGGVIAIMLLLIPLTHGPLL. The Extracellular segment spans residues 475 to 967; it reads AQSAKSMRTT…LEVSASAPHH (493 aa). Residues 511 to 513 are interacts with target acceptor peptide in protein substrate; the sequence is WWD. A WWDYG motif motif is present at residues 511 to 515; sequence WWDYG. Residue tyrosine 516 coordinates a glycophospholipid. A DK motif motif is present at residues 571 to 578; sequence DWAKFNAI.

Belongs to the STT3 family. Mn(2+) serves as cofactor. Mg(2+) is required as a cofactor.

Its subcellular location is the cell membrane. It catalyses the reaction an archaeal dolichyl phosphooligosaccharide + [protein]-L-asparagine = an archaeal dolichyl phosphate + a glycoprotein with the oligosaccharide chain attached by N-beta-D-glycosyl linkage to a protein L-asparagine.. It participates in protein modification; protein glycosylation. In terms of biological role, oligosaccharyl transferase (OST) that catalyzes the initial transfer of a defined glycan (ManNAcXyl(2)GlcAMan(2)GalNAc in P.furiosus) from the lipid carrier dolichol-monophosphate to an asparagine residue within an Asn-X-Ser/Thr consensus motif in nascent polypeptide chains, the first step in protein N-glycosylation. This chain is Dolichyl-phosphooligosaccharide-protein glycotransferase 1 (aglB1), found in Pyrococcus furiosus (strain ATCC 43587 / DSM 3638 / JCM 8422 / Vc1).